Reading from the N-terminus, the 104-residue chain is Ribonuclease P protein component 4 (104 aa).

Residues Cys-63, Cys-66, Cys-89, and Cys-92 each contribute to the Zn(2+) site.

It belongs to the eukaryotic/archaeal RNase P protein component 4 family. As to quaternary structure, consists of a catalytic RNA component and at least 4-5 protein subunits. It depends on Zn(2+) as a cofactor.

The protein resides in the cytoplasm. It carries out the reaction Endonucleolytic cleavage of RNA, removing 5'-extranucleotides from tRNA precursor.. Part of ribonuclease P, a protein complex that generates mature tRNA molecules by cleaving their 5'-ends. This chain is Ribonuclease P protein component 4, found in Methanoregula boonei (strain DSM 21154 / JCM 14090 / 6A8).